Reading from the N-terminus, the 556-residue chain is Delta-1-pyrroline-5-carboxylate dehydrogenase, mitochondrial (556 aa).

A mitochondrion-targeting transit peptide spans 1-17 (MLRARSAVSQSWKGFKT). Residues Lys-226 and 279–283 (GSVPT) each bind NAD(+). The Proton acceptor role is filled by Glu-307. Cys-341 serves as the catalytic Nucleophile. Glu-440 provides a ligand contact to NAD(+). Ser-506 provides a ligand contact to substrate.

It belongs to the aldehyde dehydrogenase family.

The protein localises to the mitochondrion matrix. The catalysed reaction is L-glutamate 5-semialdehyde + NAD(+) + H2O = L-glutamate + NADH + 2 H(+). The protein operates within amino-acid degradation; L-proline degradation into L-glutamate; L-glutamate from L-proline: step 2/2. Functionally, irreversible conversion of delta-1-pyrroline-5-carboxylate (P5C), derived either from proline or ornithine, to glutamate. This is a necessary step in the pathway interconnecting the urea and tricarboxylic acid cycles. The protein is Delta-1-pyrroline-5-carboxylate dehydrogenase, mitochondrial (aldh4a1) of Danio rerio (Zebrafish).